A 130-amino-acid polypeptide reads, in one-letter code: Small ribosomal subunit protein uS8 (130 aa).

Belongs to the universal ribosomal protein uS8 family. As to quaternary structure, part of the 30S ribosomal subunit.

In terms of biological role, one of the primary rRNA binding proteins, it binds directly to 16S rRNA central domain where it helps coordinate assembly of the platform of the 30S subunit. The sequence is that of Small ribosomal subunit protein uS8 from Methanobrevibacter smithii (strain ATCC 35061 / DSM 861 / OCM 144 / PS).